Reading from the N-terminus, the 424-residue chain is Testican-2 (424 aa).

Residues 1–22 form the signal peptide; it reads MRAPGCGRLVLPLLLLAAAALA. At Ser72 the chain carries Phosphoserine; by FAM20C. 5 disulfide bridges follow: Cys90–Cys101, Cys95–Cys111, Cys136–Cys166, Cys139–Cys159, and Cys148–Cys180. Positions 130 to 182 constitute a Kazal-like domain; it reads GNKDSICKPCHMAQLASVCGSDGHTYSSVCKLEQQACLSSKQLAVRCEGPCPC. Residue Asn225 is glycosylated (N-linked (GlcNAc...) asparagine). The 67-residue stretch at 310 to 376 folds into the Thyroglobulin type-1 domain; the sequence is KPPCLAELER…GTRTHGSPDC (67 aa). 3 disulfide bridges follow: Cys313/Cys337, Cys348/Cys355, and Cys357/Cys376. O-linked (Xyl...) (glycosaminoglycan) serine glycosylation is found at Ser383 and Ser388. Residues 387-424 form a disordered region; the sequence is GSGVGWEDEEEKETEEAGEEAEEEEGEAGEADDGGYIW. A compositionally biased stretch (acidic residues) spans 392–424; it reads WEDEEEKETEEAGEEAEEEEGEAGEADDGGYIW.

Post-translationally, contains chondroitin sulfate and heparan sulfate O-linked oligosaccharides. In terms of tissue distribution, highly expressed in brain. Also found in lung and testis.

It localises to the secreted. The protein localises to the extracellular space. It is found in the extracellular matrix. May participate in diverse steps of neurogenesis. Binds calcium. This is Testican-2 (SPOCK2) from Homo sapiens (Human).